We begin with the raw amino-acid sequence, 278 residues long: MKTKTDFLKMKEQGEPITMLTAYDYPSAKLAEEAEVDMILVGDSLGMVVLGYDSTVPVTVEDMIHHTKAVRRGAKETFIVTDMPFMSYHVSPQDTMVNARRIVQESGAHALKVEGAGEVISTIHYLTSAGIPVVAHLGLTPQSVGVLGGYKVQGKDAESAKKLIEDAKRCEEAGAIALVLECVPMQLAEFISKQLTIPTIGIGAGQKVDGQVLVYHDLISYGVNRVPKFVKQYTFVQEEIVRGISQYVTEVKTGQFPEEKHSFTMKEEECLALYGGKQ.

D43 and D82 together coordinate Mg(2+). 3-methyl-2-oxobutanoate is bound by residues 43 to 44 (DS), D82, and K112. Residue E114 participates in Mg(2+) binding. The active-site Proton acceptor is E181.

It belongs to the PanB family. In terms of assembly, homodecamer; pentamer of dimers. It depends on Mg(2+) as a cofactor.

It is found in the cytoplasm. The enzyme catalyses 3-methyl-2-oxobutanoate + (6R)-5,10-methylene-5,6,7,8-tetrahydrofolate + H2O = 2-dehydropantoate + (6S)-5,6,7,8-tetrahydrofolate. The protein operates within cofactor biosynthesis; (R)-pantothenate biosynthesis; (R)-pantoate from 3-methyl-2-oxobutanoate: step 1/2. Functionally, catalyzes the reversible reaction in which hydroxymethyl group from 5,10-methylenetetrahydrofolate is transferred onto alpha-ketoisovalerate to form ketopantoate. In Bacillus cereus (strain ATCC 10987 / NRS 248), this protein is 3-methyl-2-oxobutanoate hydroxymethyltransferase.